The chain runs to 196 residues: Aliphatic amidase regulator (196 aa).

The region spanning 129 to 190 (MAKLKQKTEQ…PILKIAQELL (62 aa)) is the ANTAR domain.

In terms of assembly, forms a complex with AmiC.

In terms of biological role, positive controlling element of AmiE, the gene for aliphatic amidase. Acts as a transcriptional antitermination factor. It is thought to allow RNA polymerase read through a rho-independent transcription terminator between the AmiE promoter and gene. The polypeptide is Aliphatic amidase regulator (amiR) (Pseudomonas aeruginosa (strain ATCC 15692 / DSM 22644 / CIP 104116 / JCM 14847 / LMG 12228 / 1C / PRS 101 / PAO1)).